A 93-amino-acid chain; its full sequence is Probable Fe(2+)-trafficking protein (93 aa).

The protein belongs to the Fe(2+)-trafficking protein family.

Functionally, could be a mediator in iron transactions between iron acquisition and iron-requiring processes, such as synthesis and/or repair of Fe-S clusters in biosynthetic enzymes. This is Probable Fe(2+)-trafficking protein from Polaromonas naphthalenivorans (strain CJ2).